Reading from the N-terminus, the 312-residue chain is Aspartate carbamoyltransferase catalytic subunit (312 aa).

Residues arginine 62 and threonine 63 each contribute to the carbamoyl phosphate site. Lysine 90 contributes to the L-aspartate binding site. Residues arginine 112, histidine 140, and glutamine 143 each contribute to the carbamoyl phosphate site. Residues arginine 173 and arginine 228 each contribute to the L-aspartate site. 2 residues coordinate carbamoyl phosphate: glycine 269 and proline 270.

Belongs to the aspartate/ornithine carbamoyltransferase superfamily. ATCase family. Heterododecamer (2C3:3R2) of six catalytic PyrB chains organized as two trimers (C3), and six regulatory PyrI chains organized as three dimers (R2).

The catalysed reaction is carbamoyl phosphate + L-aspartate = N-carbamoyl-L-aspartate + phosphate + H(+). It participates in pyrimidine metabolism; UMP biosynthesis via de novo pathway; (S)-dihydroorotate from bicarbonate: step 2/3. In terms of biological role, catalyzes the condensation of carbamoyl phosphate and aspartate to form carbamoyl aspartate and inorganic phosphate, the committed step in the de novo pyrimidine nucleotide biosynthesis pathway. This Deinococcus geothermalis (strain DSM 11300 / CIP 105573 / AG-3a) protein is Aspartate carbamoyltransferase catalytic subunit.